The following is a 165-amino-acid chain: Crossover junction endodeoxyribonuclease RuvC (165 aa).

Active-site residues include D6, E67, and D142. Residues D6, E67, and D142 each coordinate Mg(2+).

Belongs to the RuvC family. As to quaternary structure, homodimer which binds Holliday junction (HJ) DNA. The HJ becomes 2-fold symmetrical on binding to RuvC with unstacked arms; it has a different conformation from HJ DNA in complex with RuvA. In the full resolvosome a probable DNA-RuvA(4)-RuvB(12)-RuvC(2) complex forms which resolves the HJ. Mg(2+) is required as a cofactor.

The protein resides in the cytoplasm. It carries out the reaction Endonucleolytic cleavage at a junction such as a reciprocal single-stranded crossover between two homologous DNA duplexes (Holliday junction).. Its function is as follows. The RuvA-RuvB-RuvC complex processes Holliday junction (HJ) DNA during genetic recombination and DNA repair. Endonuclease that resolves HJ intermediates. Cleaves cruciform DNA by making single-stranded nicks across the HJ at symmetrical positions within the homologous arms, yielding a 5'-phosphate and a 3'-hydroxyl group; requires a central core of homology in the junction. The consensus cleavage sequence is 5'-(A/T)TT(C/G)-3'. Cleavage occurs on the 3'-side of the TT dinucleotide at the point of strand exchange. HJ branch migration catalyzed by RuvA-RuvB allows RuvC to scan DNA until it finds its consensus sequence, where it cleaves and resolves the cruciform DNA. This chain is Crossover junction endodeoxyribonuclease RuvC, found in Chlamydia abortus (strain DSM 27085 / S26/3) (Chlamydophila abortus).